The following is a 437-amino-acid chain: Ribosomal protein uS12 methylthiotransferase RimO (437 aa).

An MTTase N-terminal domain is found at 5 to 116; sequence PTIAISHLGC…IVEIVERVET (112 aa). Positions 14, 50, 79, 154, 158, and 161 each coordinate [4Fe-4S] cluster. The Radical SAM core domain maps to 140–369; sequence TTSEGVAYLR…MLTQQPISER (230 aa). The TRAM domain occupies 372-437; the sequence is QAYIGQTVDV…DTYDLYGEIV (66 aa).

This sequence belongs to the methylthiotransferase family. RimO subfamily. The cofactor is [4Fe-4S] cluster.

The protein resides in the cytoplasm. The catalysed reaction is L-aspartate(89)-[ribosomal protein uS12]-hydrogen + (sulfur carrier)-SH + AH2 + 2 S-adenosyl-L-methionine = 3-methylsulfanyl-L-aspartate(89)-[ribosomal protein uS12]-hydrogen + (sulfur carrier)-H + 5'-deoxyadenosine + L-methionine + A + S-adenosyl-L-homocysteine + 2 H(+). Functionally, catalyzes the methylthiolation of an aspartic acid residue of ribosomal protein uS12. The protein is Ribosomal protein uS12 methylthiotransferase RimO of Microcystis aeruginosa (strain NIES-843 / IAM M-2473).